Reading from the N-terminus, the 570-residue chain is Sulfite reductase [NADPH] hemoprotein beta-component (570 aa).

Positions 434, 440, 479, and 483 each coordinate [4Fe-4S] cluster. Cys483 is a binding site for siroheme.

It belongs to the nitrite and sulfite reductase 4Fe-4S domain family. Alpha(8)-beta(8). The alpha component is a flavoprotein, the beta component is a hemoprotein. It depends on siroheme as a cofactor. [4Fe-4S] cluster is required as a cofactor.

The enzyme catalyses hydrogen sulfide + 3 NADP(+) + 3 H2O = sulfite + 3 NADPH + 4 H(+). It participates in sulfur metabolism; hydrogen sulfide biosynthesis; hydrogen sulfide from sulfite (NADPH route): step 1/1. Functionally, component of the sulfite reductase complex that catalyzes the 6-electron reduction of sulfite to sulfide. This is one of several activities required for the biosynthesis of L-cysteine from sulfate. In Salmonella typhimurium (strain LT2 / SGSC1412 / ATCC 700720), this protein is Sulfite reductase [NADPH] hemoprotein beta-component (cysI).